Consider the following 1113-residue polypeptide: Protein translocase subunit SecA (1113 aa).

ATP contacts are provided by residues Q175, 193 to 197, and D694; that span reads GEGKT. A compositionally biased stretch (basic and acidic residues) spans 1042 to 1072; it reads RHAAEQRTDMSKYRTQKDDIEAQQKAQRDAA. Positions 1042-1113 are disordered; it reads RHAAEQRTDM…KFKQCHGRNL (72 aa). The Zn(2+) site is built by C1097, C1099, C1108, and H1109. Positions 1103–1113 are enriched in basic residues; that stretch reads KKFKQCHGRNL.

This sequence belongs to the SecA family. In terms of assembly, monomer and homodimer. Part of the essential Sec protein translocation apparatus which comprises SecA, SecYEG and auxiliary proteins SecDF. Other proteins may also be involved. It depends on Zn(2+) as a cofactor.

Its subcellular location is the cell inner membrane. It is found in the cytoplasm. The enzyme catalyses ATP + H2O + cellular proteinSide 1 = ADP + phosphate + cellular proteinSide 2.. Part of the Sec protein translocase complex. Interacts with the SecYEG preprotein conducting channel. Has a central role in coupling the hydrolysis of ATP to the transfer of proteins into and across the cell membrane, serving as an ATP-driven molecular motor driving the stepwise translocation of polypeptide chains across the membrane. In Porphyromonas gingivalis (strain ATCC 33277 / DSM 20709 / CIP 103683 / JCM 12257 / NCTC 11834 / 2561), this protein is Protein translocase subunit SecA.